The following is a 43-amino-acid chain: Defensin-A (43 aa).

3 cysteine pairs are disulfide-bonded: C3/C34, C20/C39, and C24/C41.

Its subcellular location is the secreted. Antibacterial protein. Strong activity against the Gram-positive bacteria M.luteus, B.megaterium and S.aureus. Reduced activity against Gram-positive bacterium B.subtilis and weak activity against Gram-negative bacterium X.japonicus. No detectable activity against the Gram-negative bacteria E.asbriae, E.coli, P.aeruginosa and S.marcescens. The chain is Defensin-A from Anomala cuprea (Cupreous chafer beetle).